The primary structure comprises 571 residues: Adenine deaminase (571 aa).

It belongs to the metallo-dependent hydrolases superfamily. Adenine deaminase family. It depends on Mn(2+) as a cofactor.

The catalysed reaction is adenine + H2O + H(+) = hypoxanthine + NH4(+). In Dehalococcoides mccartyi (strain ATCC BAA-2266 / KCTC 15142 / 195) (Dehalococcoides ethenogenes (strain 195)), this protein is Adenine deaminase.